The chain runs to 76 residues: Conotoxin Am6.3 (76 aa).

The first 22 residues, 1 to 22, serve as a signal peptide directing secretion; it reads MKLTCMMIIAVLFLTAWTFATA. 3 disulfides stabilise this stretch: Cys52–Cys67, Cys59–Cys71, and Cys66–Cys75.

It belongs to the conotoxin O1 superfamily. Post-translationally, is not hydroxylated. Expressed by the venom duct.

It is found in the secreted. In terms of biological role, probable toxin that inhibits ion channels. This Conus amadis (Amadis cone) protein is Conotoxin Am6.3.